The sequence spans 381 residues: L-lactate dehydrogenase (381 aa).

The FMN hydroxy acid dehydrogenase domain occupies 1 to 380 (MIISASTDYR…NRDSLAVSER (380 aa)). A substrate-binding site is contributed by Tyr24. FMN-binding residues include Ser106 and Gln127. Tyr129 lines the substrate pocket. Thr155 serves as a coordination point for FMN. Arg164 lines the substrate pocket. Lys251 serves as a coordination point for FMN. The active-site Proton acceptor is His275. Arg278 is a substrate binding site. 306 to 330 (DSGIRTGLDVVRMIALGADSVLLGR) contributes to the FMN binding site.

The protein belongs to the FMN-dependent alpha-hydroxy acid dehydrogenase family. The cofactor is FMN.

The protein resides in the cell inner membrane. The enzyme catalyses (S)-lactate + A = pyruvate + AH2. Its function is as follows. Catalyzes the conversion of L-lactate to pyruvate. Is coupled to the respiratory chain. The chain is L-lactate dehydrogenase from Yersinia pseudotuberculosis serotype O:1b (strain IP 31758).